The primary structure comprises 553 residues: Keratin, type II cytoskeletal 73 (553 aa).

Residues 1–130 (MNRQFTCKSG…DPEIQKVRAQ (130 aa)) are head. The tract at residues 131 to 166 (EREQIKALNNKFASFIDKVRFLEQQNQVLQTKWELL) is coil 1A. One can recognise an IF rod domain in the interval 131–444 (EREQIKALNN…KLLEGEECRM (314 aa)). A linker 1 region spans residues 167–185 (QQLDLSNCRRNLEPVYEAH). Residues 186–277 (ISSLQKQLDS…CLYEGEITQM (92 aa)) form a coil 1B region. The tract at residues 278–301 (QSHISDTSVVLSMDNNRNLDLDSI) is linker 12. Residues 302–440 (IAEVRAQYED…ATYRKLLEGE (139 aa)) form a coil 2 region. Residues 441 to 539 (ECRMSGEHTN…LGSPSKKTMR (99 aa)) form a tail region.

The protein belongs to the intermediate filament family. As to quaternary structure, heterotetramer of two type I and two type II keratins.

Has a role in hair formation. Specific component of keratin intermediate filaments in the inner root sheath (IRS) of the hair follicle. The chain is Keratin, type II cytoskeletal 73 (Krt73) from Rattus norvegicus (Rat).